A 66-amino-acid polypeptide reads, in one-letter code: Cold shock protein CspD (66 aa).

The CSD domain maps to glycine 4–valine 63.

The protein localises to the cytoplasm. The polypeptide is Cold shock protein CspD (cspD) (Bacillus subtilis (strain 168)).